We begin with the raw amino-acid sequence, 319 residues long: Acetyl-coenzyme A carboxylase carboxyl transferase subunit alpha (319 aa).

In terms of domain architecture, CoA carboxyltransferase C-terminal spans 35–296 (NLDEEVQRLR…KAQLLIDLAE (262 aa)).

This sequence belongs to the AccA family. In terms of assembly, acetyl-CoA carboxylase is a heterohexamer composed of biotin carboxyl carrier protein (AccB), biotin carboxylase (AccC) and two subunits each of ACCase subunit alpha (AccA) and ACCase subunit beta (AccD).

It localises to the cytoplasm. The enzyme catalyses N(6)-carboxybiotinyl-L-lysyl-[protein] + acetyl-CoA = N(6)-biotinyl-L-lysyl-[protein] + malonyl-CoA. It functions in the pathway lipid metabolism; malonyl-CoA biosynthesis; malonyl-CoA from acetyl-CoA: step 1/1. Its function is as follows. Component of the acetyl coenzyme A carboxylase (ACC) complex. First, biotin carboxylase catalyzes the carboxylation of biotin on its carrier protein (BCCP) and then the CO(2) group is transferred by the carboxyltransferase to acetyl-CoA to form malonyl-CoA. This is Acetyl-coenzyme A carboxylase carboxyl transferase subunit alpha from Photorhabdus laumondii subsp. laumondii (strain DSM 15139 / CIP 105565 / TT01) (Photorhabdus luminescens subsp. laumondii).